The chain runs to 46 residues: Antimicrobial peptide eNAP-1 (46 aa).

Disulfide bonds link C4–C16 and C10–C26.

The protein belongs to the granulin family.

Its subcellular location is the secreted. Functionally, has antimicrobial activity against Gram-negative and Gram-positive bacteria. The protein is Antimicrobial peptide eNAP-1 of Equus caballus (Horse).